We begin with the raw amino-acid sequence, 93 residues long: Small ribosomal subunit protein uS19 (93 aa).

Belongs to the universal ribosomal protein uS19 family.

Functionally, protein S19 forms a complex with S13 that binds strongly to the 16S ribosomal RNA. The sequence is that of Small ribosomal subunit protein uS19 from Microcystis aeruginosa (strain NIES-843 / IAM M-2473).